The primary structure comprises 163 residues: Sorting nexin-3 (163 aa).

Residues 1–20 (MASDQDNSGLDAPGSQFHRP) form a disordered region. The PX domain maps to 42-159 (NFLEIEVRNP…AAFVQDPNWD (118 aa)). Residues arginine 85, serine 87, lysine 111, arginine 116, and arginine 125 each coordinate a 1,2-diacyl-sn-glycero-3-phospho-(1D-myo-inositol-3-phosphate).

It belongs to the sorting nexin family.

The protein localises to the cytoplasm. It localises to the golgi apparatus membrane. The protein resides in the prevacuolar compartment membrane. Its function is as follows. Required for retention of late Golgi membrane proteins. Component of the retrieval machinery that functions by direct interaction with the cytosolic tails of certain TGN membrane proteins during the sorting/budding process at the prevacuolar compartment. Binds phosphatidylinositol 3-phosphate (PtdIns(P3)). The polypeptide is Sorting nexin-3 (SNX3) (Gibberella zeae (strain ATCC MYA-4620 / CBS 123657 / FGSC 9075 / NRRL 31084 / PH-1) (Wheat head blight fungus)).